A 208-amino-acid chain; its full sequence is Putative archaetidylserine decarboxylase proenzyme (208 aa).

Ser172 serves as the catalytic Schiff-base intermediate with substrate; via pyruvic acid. Ser172 carries the pyruvic acid (Ser); by autocatalysis modification.

The protein belongs to the phosphatidylserine decarboxylase family. PSD-A subfamily. As to quaternary structure, heterodimer of a large membrane-associated beta subunit and a small pyruvoyl-containing alpha subunit. Requires pyruvate as cofactor. Is synthesized initially as an inactive proenzyme. Formation of the active enzyme involves a self-maturation process in which the active site pyruvoyl group is generated from an internal serine residue via an autocatalytic post-translational modification. Two non-identical subunits are generated from the proenzyme in this reaction, and the pyruvate is formed at the N-terminus of the alpha chain, which is derived from the carboxyl end of the proenzyme. The post-translation cleavage follows an unusual pathway, termed non-hydrolytic serinolysis, in which the side chain hydroxyl group of the serine supplies its oxygen atom to form the C-terminus of the beta chain, while the remainder of the serine residue undergoes an oxidative deamination to produce ammonia and the pyruvoyl prosthetic group on the alpha chain.

The protein localises to the cell membrane. It catalyses the reaction archaetidylserine + H(+) = archaetidylethanolamine + CO2. Catalyzes the formation of archaetidylethanolamine (PtdEtn) from archaetidylserine (PtdSer). In Methanosarcina mazei (strain ATCC BAA-159 / DSM 3647 / Goe1 / Go1 / JCM 11833 / OCM 88) (Methanosarcina frisia), this protein is Putative archaetidylserine decarboxylase proenzyme.